The sequence spans 181 residues: Oligoribonuclease (181 aa).

Residues 8 to 171 enclose the Exonuclease domain; sequence LIWIDLEMTG…DDIRESVAEL (164 aa). Residue Tyr-129 is part of the active site.

This sequence belongs to the oligoribonuclease family.

Its subcellular location is the cytoplasm. 3'-to-5' exoribonuclease specific for small oligoribonucleotides. In Sodalis glossinidius (strain morsitans), this protein is Oligoribonuclease.